The primary structure comprises 576 residues: Beta-bisabolene synthase (576 aa).

Residues R286, D323, D327, R466, and N469 each coordinate (2E,6E)-farnesyl diphosphate. The Mg(2+) site is built by D323 and D327. The DDXXD motif signature appears at 323–327 (DDVYD). Residues N469, T473, and E477 each contribute to the Mg(2+) site.

It belongs to the terpene synthase family. Tpsb subfamily. It depends on Mg(2+) as a cofactor. The cofactor is Mn(2+).

In terms of biological role, produces almost exclusively beta-bisabolene and only traces of alpha-bisabolol from (2E,6E)-farnesyl diphosphate in fragrance biosynthesis. This chain is Beta-bisabolene synthase, found in Santalum austrocaledonicum (Sandalwood).